Reading from the N-terminus, the 127-residue chain is Small ribosomal subunit protein eS8 (127 aa).

The disordered stretch occupies residues 1–33 (MAIWQGKSMKKPSGGRAKMNRGKRKYELGREPA).

Belongs to the eukaryotic ribosomal protein eS8 family. As to quaternary structure, part of the 30S ribosomal subunit.

In Methanothermobacter thermautotrophicus (strain ATCC 29096 / DSM 1053 / JCM 10044 / NBRC 100330 / Delta H) (Methanobacterium thermoautotrophicum), this protein is Small ribosomal subunit protein eS8 (rps8e).